Consider the following 521-residue polypeptide: Probable protein phosphatase 2C 16 (521 aa).

One can recognise a PPM-type phosphatase domain in the interval 21-327 (KYVVSSMQGW…ENTTVILVQF (307 aa)). Positions 57, 58, 276, and 318 each coordinate Mn(2+). The tract at residues 354 to 431 (AAPAGASDTS…ADADDGAPKP (78 aa)) is disordered.

This sequence belongs to the PP2C family. Requires Mg(2+) as cofactor. Mn(2+) is required as a cofactor.

It carries out the reaction O-phospho-L-seryl-[protein] + H2O = L-seryl-[protein] + phosphate. The catalysed reaction is O-phospho-L-threonyl-[protein] + H2O = L-threonyl-[protein] + phosphate. The chain is Probable protein phosphatase 2C 16 from Oryza sativa subsp. japonica (Rice).